A 364-amino-acid chain; its full sequence is D-alanine--D-alanine ligase A (364 aa).

The ATP-grasp domain maps to 145–348 (KRLLRDAGLN…YTDLISRLIE (204 aa)). 175–230 (ESRLGLPLFVKPANQGSSVGVSKVANEAQYQQAVALAFEFDHKVVVEQGIKGREIE) is an ATP binding site. Mg(2+) is bound by residues aspartate 302, glutamate 315, and asparagine 317.

It belongs to the D-alanine--D-alanine ligase family. It depends on Mg(2+) as a cofactor. The cofactor is Mn(2+).

Its subcellular location is the cytoplasm. It catalyses the reaction 2 D-alanine + ATP = D-alanyl-D-alanine + ADP + phosphate + H(+). It participates in cell wall biogenesis; peptidoglycan biosynthesis. Its function is as follows. Cell wall formation. This Salmonella typhi protein is D-alanine--D-alanine ligase A (ddlA).